Consider the following 109-residue polypeptide: Small ribosomal subunit protein eS25 (109 aa).

A compositionally biased stretch (basic and acidic residues) spans 1-13; that stretch reads MVKKIQESKEKKA. Positions 1-34 are disordered; that stretch reads MVKKIQESKEKKALKAASGTRKDKKKWGDGRKKE.

It belongs to the eukaryotic ribosomal protein eS25 family.

In Encephalitozoon cuniculi (strain GB-M1) (Microsporidian parasite), this protein is Small ribosomal subunit protein eS25 (RPS25-1).